The chain runs to 307 residues: MEGVVLLHKPKGMTSHDCIFKLRKILREKRIGHTGTLDPDVTGVLPICVGRATKIAQFLTSETKTYEGEVTLGFSTTTEDASGEVVETKHVDRVITRKEVEEVLAALTGTIEQMPPMFSAVKVNGKKLYEYARAGQEVERPVRTITIHEFVLLDEREVFEGENISFRFRVTCSKGTYVRTLAVMIGEKLGFPSHMSHLVRTASGEFVLEDCISFEEIEENVQNGTVESIFISIDEALSKFPKMVVDEKQAEKIKNGMFLKNELQITAPFITVFDKNDRCLAIYEHHPKHPGMLKPMKVLVNNQELKL.

Residue Asp-38 is the Nucleophile of the active site.

This sequence belongs to the pseudouridine synthase TruB family. Type 1 subfamily.

The catalysed reaction is uridine(55) in tRNA = pseudouridine(55) in tRNA. In terms of biological role, responsible for synthesis of pseudouridine from uracil-55 in the psi GC loop of transfer RNAs. The protein is tRNA pseudouridine synthase B of Bacillus cereus (strain ATCC 10987 / NRS 248).